A 563-amino-acid polypeptide reads, in one-letter code: Sulfite reductase [NADPH] hemoprotein beta-component (563 aa).

4 residues coordinate [4Fe-4S] cluster: C426, C432, C472, and C476. C476 contributes to the siroheme binding site.

Belongs to the nitrite and sulfite reductase 4Fe-4S domain family. Alpha(8)-beta(8). The alpha component is a flavoprotein, the beta component is a hemoprotein. Siroheme is required as a cofactor. [4Fe-4S] cluster serves as cofactor.

The catalysed reaction is hydrogen sulfide + 3 NADP(+) + 3 H2O = sulfite + 3 NADPH + 4 H(+). It participates in sulfur metabolism; hydrogen sulfide biosynthesis; hydrogen sulfide from sulfite (NADPH route): step 1/1. In terms of biological role, component of the sulfite reductase complex that catalyzes the 6-electron reduction of sulfite to sulfide. This is one of several activities required for the biosynthesis of L-cysteine from sulfate. In Photobacterium profundum (strain SS9), this protein is Sulfite reductase [NADPH] hemoprotein beta-component.